A 485-amino-acid polypeptide reads, in one-letter code: Probable protein phosphatase 2C 3 (485 aa).

Over residues 1–11 (MSSPSPSSEAA) the composition is skewed to low complexity. 2 disordered regions span residues 1-29 (MSSP…AAGG) and 43-72 (ARAE…AEGG). The span at 13–23 (AHHHHHQRRQH) shows a compositional bias: basic residues. Residues 107-353 (SSSSSSSLAS…DDTTCIVVDM (247 aa)) form the PPM-type phosphatase domain. The Mn(2+) site is built by aspartate 129, glycine 130, aspartate 305, and aspartate 344.

The protein belongs to the PP2C family. It depends on Mg(2+) as a cofactor. Mn(2+) serves as cofactor.

The catalysed reaction is O-phospho-L-seryl-[protein] + H2O = L-seryl-[protein] + phosphate. The enzyme catalyses O-phospho-L-threonyl-[protein] + H2O = L-threonyl-[protein] + phosphate. The polypeptide is Probable protein phosphatase 2C 3 (Oryza sativa subsp. japonica (Rice)).